A 95-amino-acid chain; its full sequence is Large ribosomal subunit protein uL23 (95 aa).

It belongs to the universal ribosomal protein uL23 family. As to quaternary structure, part of the 50S ribosomal subunit. Contacts protein L29, and trigger factor when it is bound to the ribosome.

Its function is as follows. One of the early assembly proteins it binds 23S rRNA. One of the proteins that surrounds the polypeptide exit tunnel on the outside of the ribosome. Forms the main docking site for trigger factor binding to the ribosome. In Desulfotalea psychrophila (strain LSv54 / DSM 12343), this protein is Large ribosomal subunit protein uL23.